The chain runs to 122 residues: Large ribosomal subunit protein uL14 (122 aa).

Belongs to the universal ribosomal protein uL14 family. In terms of assembly, part of the 50S ribosomal subunit. Forms a cluster with proteins L3 and L19. In the 70S ribosome, L14 and L19 interact and together make contacts with the 16S rRNA in bridges B5 and B8.

Functionally, binds to 23S rRNA. Forms part of two intersubunit bridges in the 70S ribosome. This chain is Large ribosomal subunit protein uL14, found in Nitrobacter winogradskyi (strain ATCC 25391 / DSM 10237 / CIP 104748 / NCIMB 11846 / Nb-255).